The primary structure comprises 314 residues: MAAVERLTIATRASRLALWQAEHVRDLLRARYPACSVELLTLTTRGDQILDRTLSKVGGKGLFVKELETALLDGRADLAVHSLKDVPVDLHAPFELSCVLERADPRDAFVSNDYGSLADLPPGAAVGTSSLRRESQIRARYPHLVVKPLRGNLDTRLGKLDNGDYAAIVLAAAGLERLGLAARIRALLEPADSLPAAGQGALGIEILQGRADVRAMLAPLGDAATLACVTAERAVSRMLGGSCQVPLAAYARIDGDELALRALVAAPDGRRIVRAERRGPRDQAQAIGESAARDLLADGADAILAELLPTSPAP.

Cys-243 is modified (S-(dipyrrolylmethanemethyl)cysteine).

The protein belongs to the HMBS family. As to quaternary structure, monomer. Requires dipyrromethane as cofactor.

The enzyme catalyses 4 porphobilinogen + H2O = hydroxymethylbilane + 4 NH4(+). The protein operates within porphyrin-containing compound metabolism; protoporphyrin-IX biosynthesis; coproporphyrinogen-III from 5-aminolevulinate: step 2/4. In terms of biological role, tetrapolymerization of the monopyrrole PBG into the hydroxymethylbilane pre-uroporphyrinogen in several discrete steps. The protein is Porphobilinogen deaminase of Bordetella bronchiseptica (strain ATCC BAA-588 / NCTC 13252 / RB50) (Alcaligenes bronchisepticus).